The sequence spans 335 residues: Beta-ketoacyl-[acyl-carrier-protein] synthase III 1 (335 aa).

Catalysis depends on residues Cys-116 and His-256. The interval 257-261 (QANQR) is ACP-binding. Residue Asn-286 is part of the active site.

This sequence belongs to the thiolase-like superfamily. FabH family. As to quaternary structure, homodimer.

The protein resides in the cytoplasm. It catalyses the reaction malonyl-[ACP] + acetyl-CoA + H(+) = 3-oxobutanoyl-[ACP] + CO2 + CoA. It participates in lipid metabolism; fatty acid biosynthesis. In terms of biological role, catalyzes the condensation reaction of fatty acid synthesis by the addition to an acyl acceptor of two carbons from malonyl-ACP. Catalyzes the first condensation reaction which initiates fatty acid synthesis and may therefore play a role in governing the total rate of fatty acid production. Possesses both acetoacetyl-ACP synthase and acetyl transacylase activities. Its substrate specificity determines the biosynthesis of branched-chain and/or straight-chain of fatty acids. This is Beta-ketoacyl-[acyl-carrier-protein] synthase III 1 from Bacteroides thetaiotaomicron (strain ATCC 29148 / DSM 2079 / JCM 5827 / CCUG 10774 / NCTC 10582 / VPI-5482 / E50).